Consider the following 242-residue polypeptide: Phosphomannomutase 2 (242 aa).

The active-site Nucleophile is the D8. Positions 8 and 10 each coordinate Mg(2+). Residue D10 is the Proton donor/acceptor of the active site. The alpha-D-mannose 1-phosphate site is built by R17, R119, R130, and R137. An N6-acetyllysine modification is found at K145. Alpha-D-mannose 1-phosphate contacts are provided by S175 and D177. Residues D205, F217, D219, and T222 each contribute to the Mg(2+) site.

This sequence belongs to the eukaryotic PMM family. In terms of assembly, homodimer.

It localises to the cytoplasm. It catalyses the reaction alpha-D-mannose 1-phosphate = D-mannose 6-phosphate. It functions in the pathway nucleotide-sugar biosynthesis; GDP-alpha-D-mannose biosynthesis; alpha-D-mannose 1-phosphate from D-fructose 6-phosphate: step 2/2. Involved in the synthesis of the GDP-mannose and dolichol-phosphate-mannose required for a number of critical mannosyl transfer reactions. This is Phosphomannomutase 2 (Pmm2) from Mus musculus (Mouse).